A 95-amino-acid chain; its full sequence is Glutamyl-tRNA(Gln) amidotransferase subunit C (95 aa).

Belongs to the GatC family. Heterotrimer of A, B and C subunits.

It carries out the reaction L-glutamyl-tRNA(Gln) + L-glutamine + ATP + H2O = L-glutaminyl-tRNA(Gln) + L-glutamate + ADP + phosphate + H(+). The catalysed reaction is L-aspartyl-tRNA(Asn) + L-glutamine + ATP + H2O = L-asparaginyl-tRNA(Asn) + L-glutamate + ADP + phosphate + 2 H(+). Functionally, allows the formation of correctly charged Asn-tRNA(Asn) or Gln-tRNA(Gln) through the transamidation of misacylated Asp-tRNA(Asn) or Glu-tRNA(Gln) in organisms which lack either or both of asparaginyl-tRNA or glutaminyl-tRNA synthetases. The reaction takes place in the presence of glutamine and ATP through an activated phospho-Asp-tRNA(Asn) or phospho-Glu-tRNA(Gln). In Mesorhizobium japonicum (strain LMG 29417 / CECT 9101 / MAFF 303099) (Mesorhizobium loti (strain MAFF 303099)), this protein is Glutamyl-tRNA(Gln) amidotransferase subunit C.